Consider the following 387-residue polypeptide: Large ribosomal subunit protein uL3 (387 aa).

Ser-24 is modified (phosphoserine). Residue Lys-39 forms a Glycyl lysine isopeptide (Lys-Gly) (interchain with G-Cter in ubiquitin) linkage. Position 103 is a phosphothreonine (Thr-103). Residue Lys-136 forms a Glycyl lysine isopeptide (Lys-Gly) (interchain with G-Cter in ubiquitin) linkage. At Ser-156 the chain carries Phosphoserine. A Pros-methylhistidine modification is found at His-243. Phosphoserine is present on Ser-297.

Belongs to the universal ribosomal protein uL3 family. Component of the large ribosomal subunit (LSU). Mature yeast ribosomes consist of a small (40S) and a large (60S) subunit. The 40S small subunit contains 1 molecule of ribosomal RNA (18S rRNA) and 33 different proteins (encoded by 57 genes). The large 60S subunit contains 3 rRNA molecules (25S, 5.8S and 5S rRNA) and 46 different proteins (encoded by 81 genes). uL3 forms together with ES39L one of the contact sites for the signal recognition particle that targets ribosomes to the endoplasmic reticulum membrane. Methylation at His-243 by HPM1 is required for proper 60S subunit assembly and promotes translational elongation fidelity.

The protein localises to the cytoplasm. Functionally, component of the ribosome, a large ribonucleoprotein complex responsible for the synthesis of proteins in the cell. The small ribosomal subunit (SSU) binds messenger RNAs (mRNAs) and translates the encoded message by selecting cognate aminoacyl-transfer RNA (tRNA) molecules. The large subunit (LSU) contains the ribosomal catalytic site termed the peptidyl transferase center (PTC), which catalyzes the formation of peptide bonds, thereby polymerizing the amino acids delivered by tRNAs into a polypeptide chain. The nascent polypeptides leave the ribosome through a tunnel in the LSU and interact with protein factors that function in enzymatic processing, targeting, and the membrane insertion of nascent chains at the exit of the ribosomal tunnel. uL3 plays a role in coordinating processes of accommodating the aminoacyl-tRNA in the PTC. The chain is Large ribosomal subunit protein uL3 from Saccharomyces cerevisiae (strain ATCC 204508 / S288c) (Baker's yeast).